Here is a 100-residue protein sequence, read N- to C-terminus: Urease subunit gamma (100 aa).

The protein belongs to the urease gamma subunit family. As to quaternary structure, heterotrimer of UreA (gamma), UreB (beta) and UreC (alpha) subunits. Three heterotrimers associate to form the active enzyme.

Its subcellular location is the cytoplasm. It catalyses the reaction urea + 2 H2O + H(+) = hydrogencarbonate + 2 NH4(+). It functions in the pathway nitrogen metabolism; urea degradation; CO(2) and NH(3) from urea (urease route): step 1/1. The sequence is that of Urease subunit gamma from Methylibium petroleiphilum (strain ATCC BAA-1232 / LMG 22953 / PM1).